Consider the following 65-residue polypeptide: Large ribosomal subunit protein bL35 (65 aa).

Belongs to the bacterial ribosomal protein bL35 family.

The polypeptide is Large ribosomal subunit protein bL35 (Prochlorococcus marinus (strain MIT 9313)).